Reading from the N-terminus, the 65-residue chain is Large ribosomal subunit protein bL35 (65 aa).

A compositionally biased stretch (basic residues) spans 1–45; it reads MPKMKSHSGAKKRFKKTGNGKIKRKKANKGHLLTKKNAKRKRQLR. The disordered stretch occupies residues 1-65; that stretch reads MPKMKSHSGA…RDRIKRMLST (65 aa). A compositionally biased stretch (basic and acidic residues) spans 48–57; it reads VVVDDKANRD.

This sequence belongs to the bacterial ribosomal protein bL35 family.

The sequence is that of Large ribosomal subunit protein bL35 from Salinibacter ruber (strain DSM 13855 / M31).